We begin with the raw amino-acid sequence, 359 residues long: Ornithine carbamoyltransferase, mitochondrial (359 aa).

A mitochondrion-targeting transit peptide spans 1 to 24; that stretch reads MASLRSVLKSQSLRHTVRSYSSQT. Carbamoyl phosphate contacts are provided by residues 87-90, Arg138, His165, and Gln168; that span reads STRT. Positions 205, 271, 275, and 276 each coordinate L-ornithine. Catalysis depends on Cys313, which acts as the Proton acceptor. Residues 313–314 and Arg340 contribute to the carbamoyl phosphate site; that span reads CL.

Belongs to the aspartate/ornithine carbamoyltransferase superfamily. OTCase family. In terms of assembly, homotrimer.

It localises to the mitochondrion matrix. It catalyses the reaction carbamoyl phosphate + L-ornithine = L-citrulline + phosphate + H(+). It participates in amino-acid biosynthesis; L-arginine biosynthesis; L-arginine from L-ornithine and carbamoyl phosphate: step 1/3. This Emericella nidulans (strain FGSC A4 / ATCC 38163 / CBS 112.46 / NRRL 194 / M139) (Aspergillus nidulans) protein is Ornithine carbamoyltransferase, mitochondrial (argB).